We begin with the raw amino-acid sequence, 179 residues long: Ribosome maturation factor RimM (179 aa).

In terms of domain architecture, PRC barrel spans 95 to 174; the sequence is KDEFFYFDIL…QIFCTQDAFL (80 aa).

This sequence belongs to the RimM family. Binds ribosomal protein uS19.

The protein localises to the cytoplasm. In terms of biological role, an accessory protein needed during the final step in the assembly of 30S ribosomal subunit, possibly for assembly of the head region. Essential for efficient processing of 16S rRNA. May be needed both before and after RbfA during the maturation of 16S rRNA. It has affinity for free ribosomal 30S subunits but not for 70S ribosomes. In Campylobacter jejuni subsp. doylei (strain ATCC BAA-1458 / RM4099 / 269.97), this protein is Ribosome maturation factor RimM.